Reading from the N-terminus, the 289-residue chain is Membrane protein insertase YidC (289 aa).

Residues 1-19 form the signal peptide; the sequence is MKKKALLPLLLGIMVFLAG. C20 carries the N-palmitoyl cysteine lipid modification. A lipid anchor (S-diacylglycerol cysteine) is attached at C20. Transmembrane regions (helical) follow at residues 55 to 75, 133 to 153, 177 to 197, 210 to 230, and 231 to 251; these read YGLA…PFML, MLGC…FFVL, IWIT…STFS, MIIS…ALGL, and YWSV…AYYS. The interval 268–289 is disordered; the sequence is EHGGSGNSKGAKVVSKKNKKKK.

Belongs to the OXA1/ALB3/YidC family. Type 2 subfamily.

It localises to the cell membrane. Functionally, required for the insertion and/or proper folding and/or complex formation of integral membrane proteins into the membrane. Involved in integration of membrane proteins that insert both dependently and independently of the Sec translocase complex, as well as at least some lipoproteins. The sequence is that of Membrane protein insertase YidC from Staphylococcus carnosus (strain TM300).